The sequence spans 154 residues: Iron sulfur cluster assembly protein 1, mitochondrial (154 aa).

It belongs to the NifU family. As to quaternary structure, component of the core Fe-S cluster (ISC) assembly machinery. [2Fe-2S] cluster is required as a cofactor.

The protein resides in the mitochondrion matrix. Its pathway is cofactor biosynthesis; iron-sulfur cluster biosynthesis. Scaffold protein for the de novo synthesis of iron-sulfur (Fe-S) clusters within mitochondria, which is required for maturation of both mitochondrial and cytoplasmic [2Fe-2S] and [4Fe-4S] proteins. First, a [2Fe-2S] cluster is transiently assembled on the scaffold protein ISU1. In a second step, the cluster is released from ISU1, transferred to a glutaredoxin, followed by the formation of mitochondrial [2Fe-2S] proteins, the synthesis of [4Fe-4S] clusters and their target-specific insertion into the recipient apoproteins. Cluster assembly on ISU1 depends on the function of the cysteine desulfurase complex NFS1-ISD11, which serves as the sulfur donor for cluster synthesis, the iron-binding protein frataxin as the putative iron donor, and the electron transfer chain comprised of ferredoxin reductase and ferredoxin, which receive their electrons from NADH. The polypeptide is Iron sulfur cluster assembly protein 1, mitochondrial (ISU1) (Eremothecium gossypii (strain ATCC 10895 / CBS 109.51 / FGSC 9923 / NRRL Y-1056) (Yeast)).